A 431-amino-acid polypeptide reads, in one-letter code: Nuclear envelope integral membrane protein 1 (431 aa).

Positions 1–29 (MAGEVEGEGCRVSWGVLVALLLLPLPSLC) are cleaved as a signal peptide. The next 5 membrane-spanning stretches (helical) occupy residues 151-171 (PRLF…DTLS), 175-195 (IFYY…ILVF), 206-226 (PFVA…QLVF), 236-256 (YWQY…AFCY), and 266-286 (SINI…YISV). The segment at 176-287 (FYYSTGITVG…GLLLMYISVQ (112 aa)) is a; required for its colocalization with lamins at the nuclear envelope. The short motif at 317–325 (RKIKLKRGK) is the Nuclear localization signal element. The segment at 326–395 (PSPPRLLTEE…LTPNEVSVHE (70 aa)) is b; required for interaction with ran. The tract at residues 326-431 (PSPPRLLTEE…IEPVLYQDLR (106 aa)) is interaction with banf1-a and banf1-b. Residues 368–375 (SRIQSPKR) are BAF-binding site (BBS); essential for interaction with banf1-a, banf1-b and ran.

This sequence belongs to the NEMP family. As to quaternary structure, homooligomer. Interacts with banf1-a and banf1-b. Interacts with ran-gtp. Post-translationally, phosphorylated.

It is found in the nucleus inner membrane. The protein localises to the nucleus envelope. In concert with ran, required for proper eye development. May be involved in the expression of early eye marker genes. Contributes to nuclear envelope stiffness in germ cells. Required for fertility. Essential for normal erythropoiesis. Required for efficient nuclear envelope opening and enucleation during the late stages of erythroblast maturation. In Xenopus tropicalis (Western clawed frog), this protein is Nuclear envelope integral membrane protein 1 (nemp1).